A 232-amino-acid polypeptide reads, in one-letter code: DNA repair protein RecO (232 aa).

This sequence belongs to the RecO family.

Involved in DNA repair and RecF pathway recombination. The polypeptide is DNA repair protein RecO (Francisella tularensis subsp. novicida (strain U112)).